Here is a 183-residue protein sequence, read N- to C-terminus: Gamma-crystallin N (183 aa).

4 Beta/gamma crystallin 'Greek key' domains span residues 6–46 (GKIT…RVES), 47–89 (GAWV…RPVG), 95–136 (FRID…KVYG), and 138–180 (GAWV…RRVL).

It belongs to the beta/gamma-crystallin family. In terms of assembly, monomer. In terms of tissue distribution, detected in the auditory hindbrain where it is highly expressed in the medial nucleus of the trapezoid body, but also present in other nuclei of the superior olivary complex.

Its function is as follows. Crystallins are the dominant structural components of the vertebrate eye lens. Also plays an important role for integrity and function of auditory nuclei. The sequence is that of Gamma-crystallin N from Rattus norvegicus (Rat).